We begin with the raw amino-acid sequence, 577 residues long: CDPK-related kinase 7 (577 aa).

Positions 1 to 38 (MGLCHGKPIEQQSKNLPISNEIEETPKNSSQKAKSSGF) are disordered. Residue Gly2 is the site of N-myristoyl glycine attachment. The 263-residue stretch at 124 to 386 (YEIDGEVGRG…AAQALCHPWL (263 aa)) folds into the Protein kinase domain. Residues 130–138 (VGRGHFGYT) and Lys156 each bind ATP. The active-site Proton acceptor is the Asp252. Residue Ser292 is modified to Phosphoserine. Phosphoserine; by CPK1, CPK10 and CPK34 is present on Ser334. Residues 391–421 (ELKIPSDMIIYKLVKVYIMSSSLRKSALAAL) are autoinhibitory domain. Residues 410–430 (SSSLRKSALAALAKTLTVPQL) are calmodulin binding (CaMBD). 4 EF-hand domains span residues 428–464 (PQLT…STEA), 465–500 (TKDS…VYQL), 501–540 (EAME…GPSV), and 543–572 (HVVL…VSSR). Residues Ser443, Asn445, Tyr447, Lys484, Glu489, Asp520, Asn522, Glu529, Asp554, and Lys556 each coordinate Ca(2+). Ser558 carries the post-translational modification Phosphoserine.

This sequence belongs to the protein kinase superfamily. Ser/Thr protein kinase family. CDPK subfamily. As to quaternary structure, binds calmodulin (CaM) in a calcium-dependent manner. Post-translationally, autophosphorylated.

Its subcellular location is the membrane. It catalyses the reaction L-seryl-[protein] + ATP = O-phospho-L-seryl-[protein] + ADP + H(+). The enzyme catalyses L-threonyl-[protein] + ATP = O-phospho-L-threonyl-[protein] + ADP + H(+). With respect to regulation, activated by calcium and calmodulin. Autophosphorylation may play an important role in the regulation of the kinase activity. May play a role in signal transduction pathways that involve calcium as a second messenger. The polypeptide is CDPK-related kinase 7 (CRK7) (Arabidopsis thaliana (Mouse-ear cress)).